The primary structure comprises 65 residues: Large ribosomal subunit protein bL35 (65 aa).

The protein belongs to the bacterial ribosomal protein bL35 family.

In Chromobacterium violaceum (strain ATCC 12472 / DSM 30191 / JCM 1249 / CCUG 213 / NBRC 12614 / NCIMB 9131 / NCTC 9757 / MK), this protein is Large ribosomal subunit protein bL35.